A 583-amino-acid chain; its full sequence is Membrane protein insertase YidC (583 aa).

A run of 6 helical transmembrane segments spans residues 5–25, 341–361, 362–382, 427–447, 473–493, and 520–540; these read SVTGLAIIAVIMIVWLQFMSP, PFAEFIILPVFSWMNGFVSNY, GLIIIIFAFLIKLVTYPLSMA, IGGCLPVVLQMPLLFAMFYVF, FGFAIPMYGSHIAVFPILMAV, and AMMLLFFNNMPAGLGLYYLMF.

It belongs to the OXA1/ALB3/YidC family. Type 1 subfamily. In terms of assembly, interacts with the Sec translocase complex via SecD. Specifically interacts with transmembrane segments of nascent integral membrane proteins during membrane integration.

The protein localises to the cell inner membrane. In terms of biological role, required for the insertion and/or proper folding and/or complex formation of integral membrane proteins into the membrane. Involved in integration of membrane proteins that insert both dependently and independently of the Sec translocase complex, as well as at least some lipoproteins. Aids folding of multispanning membrane proteins. This Pelodictyon phaeoclathratiforme (strain DSM 5477 / BU-1) protein is Membrane protein insertase YidC.